The chain runs to 231 residues: Orotidine 5'-phosphate decarboxylase (231 aa).

Substrate is bound by residues aspartate 11, lysine 33, 60–69 (DLKFHDIPNT), threonine 119, arginine 180, glutamine 189, glycine 209, and arginine 210. Lysine 62 (proton donor) is an active-site residue.

It belongs to the OMP decarboxylase family. Type 1 subfamily. Homodimer.

It carries out the reaction orotidine 5'-phosphate + H(+) = UMP + CO2. The protein operates within pyrimidine metabolism; UMP biosynthesis via de novo pathway; UMP from orotate: step 2/2. In terms of biological role, catalyzes the decarboxylation of orotidine 5'-monophosphate (OMP) to uridine 5'-monophosphate (UMP). The protein is Orotidine 5'-phosphate decarboxylase of Idiomarina loihiensis (strain ATCC BAA-735 / DSM 15497 / L2-TR).